The chain runs to 75 residues: Signaling peptide TAXIMIN 1 (75 aa).

Positions 1-29 (MCDGDCRPLGFLLGLPFAFLSLLLSIIGV) are cleaved as a signal peptide.

In terms of tissue distribution, expressed in shoot apical meristems (SAM); mostly specific to the L1 layer in the center of the meristem but also detected in the L2 layer in organ primordia. Also observed in the vasculature of seedling roots.

It is found in the secreted. With respect to regulation, counteracted by the antibiotic cefotaxime during responses to light stress. Signaling peptide involved in the regulation of lateral organs separation, including fruits and leaves. Involved in the perception of and response to light stress via the control of sinapoyl-malate accumulation, a UV-B protecting compound. This chain is Signaling peptide TAXIMIN 1, found in Arabidopsis thaliana (Mouse-ear cress).